Consider the following 595-residue polypeptide: Parathyroid hormone/parathyroid hormone-related peptide receptor (595 aa).

The N-terminal stretch at 1–28 (MGAVRIAPGLALLLCCPVLSSAYALVDA) is a signal peptide. Over 29–188 (DDVMTKEEQI…REREVFDRLG (160 aa)) the chain is Extracellular. Cystine bridges form between cysteine 48/cysteine 117, cysteine 108/cysteine 148, and cysteine 131/cysteine 170. The segment at 66–103 (DKGWASASTSGKPKKEKASGKLYPESEEDKEVPTGSRH) is disordered. Residues asparagine 151, asparagine 161, asparagine 166, and asparagine 176 are each glycosylated (N-linked (GlcNAc...) asparagine). The helical transmembrane segment at 189-209 (MIYTVGYSVSLASLTVAVLIL) threads the bilayer. The Cytoplasmic portion of the chain corresponds to 210 to 223 (AYFRRLHCTRNYIH). A helical transmembrane segment spans residues 224-244 (MHLFLSFMLRAVSIFVKDAVL). Residues 245 to 294 (YSGATLDEAERLTEEELRAIAQAPPPPTAAAGYAGCRVAVTFFLYFLATN) lie on the Extracellular side of the membrane. The helical transmembrane segment at 295 to 315 (YYWILVEGLYLHSLIFMAFFS) threads the bilayer. Topologically, residues 316-318 (EKK) are cytoplasmic. A helical transmembrane segment spans residues 319-339 (YLWGFTVFGWGLPAVFVAVWV). Topologically, residues 340–360 (SVRATLANTGCWDLSSGNKKW) are extracellular. A helical transmembrane segment spans residues 361–381 (IIQVPILASIVLNFILFINIV). The Cytoplasmic portion of the chain corresponds to 382 to 404 (RVLATKLRETNAGRCDTRQQYRK). The helical transmembrane segment at 405 to 425 (LLKSTLVLMPLFGVHYIVFMA) threads the bilayer. Topologically, residues 426–439 (TPYTEVSGTLWQVQ) are extracellular. The chain crosses the membrane as a helical span at residues 440–460 (MHYEMLFNSFQGFFVAIIYCF). Residues 461 to 595 (CNGEVQAEIK…LLQEEWETVM (135 aa)) lie on the Cytoplasmic side of the membrane. The short motif at 473-476 (WSRW) is the Important for interaction with G proteins element. The interval 528–595 (TTTATTNGHP…LLQEEWETVM (68 aa)) is disordered. Low complexity predominate over residues 547–559 (APTLPATPPATAA). Threonine 553 carries the phosphothreonine modification.

This sequence belongs to the G-protein coupled receptor 2 family. As to quaternary structure, homodimer in the absence of bound ligand. Peptide hormone binding leads to dissociation of the homodimer. In terms of processing, N-glycosylated. High levels in the kidney, with much lower levels in aorta, heart, lung, prostate, testis, and skeletal muscle.

It localises to the cell membrane. G-protein-coupled receptor for parathyroid hormone (PTH) and for parathyroid hormone-related peptide (PTHLH). Ligand binding causes a conformation change that triggers signaling via guanine nucleotide-binding proteins (G proteins) and modulates the activity of downstream effectors, such as adenylate cyclase (cAMP). PTH1R is coupled to G(s) G alpha proteins and mediates activation of adenylate cyclase activity. PTHLH dissociates from PTH1R more rapidly than PTH; as consequence, the cAMP response induced by PTHLH decays faster than the response induced by PTH. The protein is Parathyroid hormone/parathyroid hormone-related peptide receptor (PTH1R) of Canis lupus familiaris (Dog).